The primary structure comprises 175 residues: Apoptosis regulator Bcl-2 homolog (175 aa).

Positions 75-94 (QVLEDKINWGRIITIIAFCA) match the BH1 motif. Positions 105–120 (SPQYYDGIISEAITDA) match the BH2 motif.

This sequence belongs to the Bcl-2 family. As to quaternary structure, interacts with host BAX; this interaction inhibits BAX oligomerization and subsequent activation. Interacts with host BAK1.

The protein localises to the host mitochondrion. Plays a role in the inhibition of host apoptosis by sequestering and inactivating multiple proapoptotic BCL-2 proteins, including BAK1 and BAX. The polypeptide is Apoptosis regulator Bcl-2 homolog (Vertebrata (FPV)).